We begin with the raw amino-acid sequence, 529 residues long: Bifunctional purine biosynthesis protein PurH (529 aa).

The region spanning 1 to 148 (MQQRRPVRRA…KNHKDVAIVV (148 aa)) is the MGS-like domain. Lys-287 carries the post-translational modification N6-acetyllysine.

This sequence belongs to the PurH family.

It carries out the reaction (6R)-10-formyltetrahydrofolate + 5-amino-1-(5-phospho-beta-D-ribosyl)imidazole-4-carboxamide = 5-formamido-1-(5-phospho-D-ribosyl)imidazole-4-carboxamide + (6S)-5,6,7,8-tetrahydrofolate. The enzyme catalyses IMP + H2O = 5-formamido-1-(5-phospho-D-ribosyl)imidazole-4-carboxamide. It functions in the pathway purine metabolism; IMP biosynthesis via de novo pathway; 5-formamido-1-(5-phospho-D-ribosyl)imidazole-4-carboxamide from 5-amino-1-(5-phospho-D-ribosyl)imidazole-4-carboxamide (10-formyl THF route): step 1/1. Its pathway is purine metabolism; IMP biosynthesis via de novo pathway; IMP from 5-formamido-1-(5-phospho-D-ribosyl)imidazole-4-carboxamide: step 1/1. The polypeptide is Bifunctional purine biosynthesis protein PurH (Escherichia coli O157:H7).